Reading from the N-terminus, the 379-residue chain is S-adenosylmethionine:tRNA ribosyltransferase-isomerase (379 aa).

The interval 35–58 (AESRPHAESVPHAESRPHAESAFS) is disordered.

The protein belongs to the QueA family. As to quaternary structure, monomer.

Its subcellular location is the cytoplasm. The enzyme catalyses 7-aminomethyl-7-carbaguanosine(34) in tRNA + S-adenosyl-L-methionine = epoxyqueuosine(34) in tRNA + adenine + L-methionine + 2 H(+). It functions in the pathway tRNA modification; tRNA-queuosine biosynthesis. Transfers and isomerizes the ribose moiety from AdoMet to the 7-aminomethyl group of 7-deazaguanine (preQ1-tRNA) to give epoxyqueuosine (oQ-tRNA). In Rhizobium leguminosarum bv. trifolii (strain WSM2304), this protein is S-adenosylmethionine:tRNA ribosyltransferase-isomerase.